Reading from the N-terminus, the 351-residue chain is Nicotinate-nucleotide--dimethylbenzimidazole phosphoribosyltransferase (351 aa).

Catalysis depends on Glu-317, which acts as the Proton acceptor.

The protein belongs to the CobT family.

It carries out the reaction 5,6-dimethylbenzimidazole + nicotinate beta-D-ribonucleotide = alpha-ribazole 5'-phosphate + nicotinate + H(+). It participates in nucleoside biosynthesis; alpha-ribazole biosynthesis; alpha-ribazole from 5,6-dimethylbenzimidazole: step 1/2. Functionally, catalyzes the synthesis of alpha-ribazole-5'-phosphate from nicotinate mononucleotide (NAMN) and 5,6-dimethylbenzimidazole (DMB). This Ectopseudomonas mendocina (strain ymp) (Pseudomonas mendocina) protein is Nicotinate-nucleotide--dimethylbenzimidazole phosphoribosyltransferase.